The chain runs to 1431 residues: Stabilin-2 (1431 aa).

The Extracellular portion of the chain corresponds to 1–1322 (SLPSLLTRLE…PPTAATAAHS (1322 aa)). Residues 2–130 (LPSLLTRLEQ…GVIHGLEKVL (129 aa)) enclose the FAS1 domain. N-linked (GlcNAc...) asparagine glycans are attached at residues asparagine 112 and asparagine 140. One can recognise a Laminin EGF-like 1 domain in the interval 207–272 (PQCQACPGRG…CSCVHGRCSQ (66 aa)). 18 disulfide bridges follow: cysteine 212/cysteine 226, cysteine 220/cysteine 236, cysteine 238/cysteine 247, cysteine 259/cysteine 270, cysteine 263/cysteine 280, cysteine 282/cysteine 291, cysteine 300/cysteine 310, cysteine 304/cysteine 320, cysteine 322/cysteine 333, cysteine 339/cysteine 352, cysteine 346/cysteine 362, cysteine 364/cysteine 375, cysteine 381/cysteine 394, cysteine 388/cysteine 404, cysteine 406/cysteine 417, cysteine 423/cysteine 436, cysteine 430/cysteine 446, and cysteine 448/cysteine 459. N-linked (GlcNAc...) asparagine glycans are attached at residues asparagine 231 and asparagine 243. EGF-like domains are found at residues 296-334 (TTDNCNGTCHTSANCLLDPDGKASCKCAAGFRGNGTVCT), 335-376 (AINA…IVCL), 377-418 (EINP…KVCS), and 419-460 (LINV…IVCR). Residue asparagine 301 is glycosylated (N-linked (GlcNAc...) asparagine). The N-linked (GlcNAc...) asparagine glycan is linked to asparagine 329. Asparagine 437 is a glycosylation site (N-linked (GlcNAc...) asparagine). 2 consecutive FAS1 domains span residues 460 to 588 (RGSI…DKLL) and 604 to 745 (VLQN…DCLL). A glycan (N-linked (GlcNAc...) asparagine) is linked at asparagine 607. Positions 822-887 (PDCQACPGGP…SCSEHGQCDE (66 aa)) constitute a Laminin EGF-like 2 domain. 6 disulfides stabilise this stretch: cysteine 827–cysteine 841, cysteine 835–cysteine 851, cysteine 853–cysteine 862, cysteine 874–cysteine 885, cysteine 879–cysteine 895, and cysteine 897–cysteine 906. Asparagine 858 is a glycosylation site (N-linked (GlcNAc...) asparagine). Asparagine 929 carries an N-linked (GlcNAc...) asparagine glycan. EGF-like domains lie at 947 to 987 (VVDF…YSCI) and 988 to 1030 (EIDP…VDCE). Intrachain disulfides connect cysteine 951–cysteine 964, cysteine 958–cysteine 973, cysteine 975–cysteine 986, cysteine 992–cysteine 1006, cysteine 1000–cysteine 1016, cysteine 1018–cysteine 1029, cysteine 1085–cysteine 1154, and cysteine 1109–cysteine 1130. In terms of domain architecture, Link spans 1063 to 1156 (GVFHLRSPLG…SEMWDVFCYR (94 aa)). Asparagine 1145, asparagine 1161, asparagine 1233, asparagine 1249, and asparagine 1258 each carry an N-linked (GlcNAc...) asparagine glycan. Residues 1176–1310 (SGNLLQVLMS…GILHIISEPL (135 aa)) form the FAS1 4 domain. Residues 1323–1343 (GLGTGIFCAVVLVTGAIALAA) form a helical membrane-spanning segment. The Cytoplasmic portion of the chain corresponds to 1344–1431 (YSYFRLKQRT…QQATTVTVPR (88 aa)). The tract at residues 1368-1378 (WLLASSSPRIS) is interaction with TMSB4X.

In terms of assembly, interacts with GULP1, heparin, alpha-M/beta-2 integrin (ITGAM and ITGB2), and thymosin beta 4 (TMSB4X). Post-translationally, glycosylated. In terms of processing, proteolytically processed to yield a 175 kDa protein. As to expression, initially expressed in all vascular cells, including those of sinusoidal-like structures, vitellin veins, and hepatic veins or sinus venosus, in E13.5 fetal liver. The expression then progressively disappears in the portal and hepatic veins, but the expression in sinusoidals endothelial cells (SECs) is retained and becomes stronger during development.

It is found in the cytoplasm. The protein localises to the cell membrane. In terms of biological role, phosphatidylserine receptor that enhances the engulfment of apoptotic cells. Hyaluronan receptor that binds to and mediates endocytosis of hyaluronic acid (HA). Also acts, in different species, as a primary systemic scavenger receptor for heparin (Hep), chondroitin sulfate (CS), dermatan sulfate (DS), nonglycosaminoglycan (GAG), acetylated low-density lipoprotein (AcLDL), pro-collagen propeptides and advanced glycation end products (AGE). May serve to maintain tissue integrity by supporting extracellular matrix turnover or it may contribute to maintaining fluidity of bodily liquids by resorption of hyaluronan. Counter receptor which plays an important role in lymphocyte recruitment in the hepatic vasculature. Binds to both Gram-positive and Gram-negative bacteria and may play a role in defense against bacterial infection. The proteolytically processed 175 kDa form also functions as an endocytosis receptor for heparin internalization as well as HA and CS. This is Stabilin-2 from Rattus norvegicus (Rat).